The sequence spans 80 residues: MTDFTPDAVLDATGLNCPEPVMMLHQHVRNLAAGGLLKVIATDPSTRRDIPKFCNFLGHELLQQQEDAGTFLYWIRKKAD.

Cysteine 17 serves as the catalytic Cysteine persulfide intermediate.

It belongs to the sulfur carrier protein TusA family.

It localises to the cytoplasm. In terms of biological role, sulfur carrier protein which probably makes part of a sulfur-relay system. The polypeptide is Sulfur carrier protein TusA (Pseudomonas putida (strain GB-1)).